The primary structure comprises 104 residues: Thioredoxin (104 aa).

The Thioredoxin domain maps to 2–104 (KQVSDASFEE…KLFEWVEASV (103 aa)). Cys29 and Cys32 are oxidised to a cystine.

This sequence belongs to the thioredoxin family.

Functionally, participates in various redox reactions through the reversible oxidation of its active center dithiol to a disulfide and catalyzes dithiol-disulfide exchange reactions. The sequence is that of Thioredoxin (trxA) from Rhodospirillum rubrum.